A 74-amino-acid polypeptide reads, in one-letter code: U3-agatoxin-Ao1b (74 aa).

An N-terminal signal peptide occupies residues 1-20 (MKAAISLIIFFAILFVVIEA). A propeptide spanning residues 21–34 (ISYEEGKELFQKER) is cleaved from the precursor. 4 cysteine pairs are disulfide-bonded: Cys37/Cys53, Cys44/Cys58, Cys52/Cys68, and Cys60/Cys66. A Serine amide modification is found at Ser72.

The protein belongs to the neurotoxin 07 (Beta/delta-agtx) family. 02 (aga-3) subfamily. As to expression, expressed by the venom gland.

It is found in the secreted. In terms of biological role, insecticidal neurotoxin that induces an irreversible spastic paralysis when injected into insects. Modifies presynaptic voltage-gated sodium channels (Nav), causing them to open at the normal resting potential of the nerve. This leads to spontaneous release of neurotransmitter and repetitive action potentials in motor neurons. The chain is U3-agatoxin-Ao1b from Agelena orientalis (Funnel-web spider).